Consider the following 182-residue polypeptide: ATP synthase subunit delta (182 aa).

Belongs to the ATPase delta chain family. In terms of assembly, F-type ATPases have 2 components, F(1) - the catalytic core - and F(0) - the membrane proton channel. F(1) has five subunits: alpha(3), beta(3), gamma(1), delta(1), epsilon(1). F(0) has three main subunits: a(1), b(2) and c(10-14). The alpha and beta chains form an alternating ring which encloses part of the gamma chain. F(1) is attached to F(0) by a central stalk formed by the gamma and epsilon chains, while a peripheral stalk is formed by the delta and b chains.

The protein localises to the cell membrane. Its function is as follows. F(1)F(0) ATP synthase produces ATP from ADP in the presence of a proton or sodium gradient. F-type ATPases consist of two structural domains, F(1) containing the extramembraneous catalytic core and F(0) containing the membrane proton channel, linked together by a central stalk and a peripheral stalk. During catalysis, ATP synthesis in the catalytic domain of F(1) is coupled via a rotary mechanism of the central stalk subunits to proton translocation. In terms of biological role, this protein is part of the stalk that links CF(0) to CF(1). It either transmits conformational changes from CF(0) to CF(1) or is implicated in proton conduction. The chain is ATP synthase subunit delta from Syntrophomonas wolfei subsp. wolfei (strain DSM 2245B / Goettingen).